The primary structure comprises 341 residues: Phosphoribosylformylglycinamidine cyclo-ligase (341 aa).

It belongs to the AIR synthase family.

It localises to the cytoplasm. The enzyme catalyses 2-formamido-N(1)-(5-O-phospho-beta-D-ribosyl)acetamidine + ATP = 5-amino-1-(5-phospho-beta-D-ribosyl)imidazole + ADP + phosphate + H(+). The protein operates within purine metabolism; IMP biosynthesis via de novo pathway; 5-amino-1-(5-phospho-D-ribosyl)imidazole from N(2)-formyl-N(1)-(5-phospho-D-ribosyl)glycinamide: step 2/2. The protein is Phosphoribosylformylglycinamidine cyclo-ligase of Finegoldia magna (strain ATCC 29328 / DSM 20472 / WAL 2508) (Peptostreptococcus magnus).